The sequence spans 599 residues: Sulfite reductase [NADPH] flavoprotein alpha-component (599 aa).

Residues 64 to 202 (ITLISASQTG…AAAEWRARVV (139 aa)) form the Flavodoxin-like domain. FMN-binding positions include 70 to 75 (SQTGNA), 117 to 120 (STQG), and 153 to 162 (LGDTSYEFFC). One can recognise an FAD-binding FR-type domain in the interval 234-448 (EAPLTATLSV…IEHNDNFRLP (215 aa)). Residues Thr322, Ala356, 386–389 (RLYS), 404–406 (TVG), Tyr410, and 419–422 (GGAS) contribute to the FAD site. NADP(+) is bound by residues 519–520 (SR), 525–529 (KIYVQ), and Asp561. Tyr599 contacts FAD.

It belongs to the NADPH-dependent sulphite reductase flavoprotein subunit CysJ family. This sequence in the N-terminal section; belongs to the flavodoxin family. The protein in the C-terminal section; belongs to the flavoprotein pyridine nucleotide cytochrome reductase family. As to quaternary structure, alpha(8)-beta(8). The alpha component is a flavoprotein, the beta component is a hemoprotein. It depends on FAD as a cofactor. The cofactor is FMN.

The catalysed reaction is hydrogen sulfide + 3 NADP(+) + 3 H2O = sulfite + 3 NADPH + 4 H(+). The protein operates within sulfur metabolism; hydrogen sulfide biosynthesis; hydrogen sulfide from sulfite (NADPH route): step 1/1. In terms of biological role, component of the sulfite reductase complex that catalyzes the 6-electron reduction of sulfite to sulfide. This is one of several activities required for the biosynthesis of L-cysteine from sulfate. The flavoprotein component catalyzes the electron flow from NADPH -&gt; FAD -&gt; FMN to the hemoprotein component. This chain is Sulfite reductase [NADPH] flavoprotein alpha-component, found in Klebsiella pneumoniae subsp. pneumoniae (strain ATCC 700721 / MGH 78578).